Here is a 376-residue protein sequence, read N- to C-terminus: Fibromodulin (376 aa).

Positions 1–18 (MQWTSLLLLAGLFSLSQA) are cleaved as a signal peptide. Pyrrolidone carboxylic acid is present on Gln-19. Tyr-20, Tyr-38, Tyr-39, Tyr-45, Tyr-47, Tyr-53, and Tyr-55 each carry sulfotyrosine. Positions 67-105 (SPSPPDPRDCPQECDCPPNFPTAMYCDNRNLKYLPFVPS) constitute an LRRNT domain. LRR repeat units lie at residues 106 to 127 (RMKYVYFQNNQITSIQEGVFDN), 130 to 151 (GLLWIALHGNQITSDKVGRKVF), 156 to 176 (HLERLYLDHNNLTRMPGPLPR), 177 to 198 (SLRELHLDHNQISRVPNNALEG), 201 to 222 (NLTALYLQHNEIQEVGSSMRGL), 224 to 245 (SLILLDLSYNHLRKVPDGLPSA), 246 to 266 (LEQLYMEHNNVYTVPDSYFRG), and 269 to 289 (KLLYVRLSHNSLTNNGLASNT). Asn-127 carries N-linked (GlcNAc...) (keratan sulfate) asparagine glycosylation. Asn-166 carries N-linked (GlcNAc...) (keratan sulfate) asparagine glycosylation. A glycan (N-linked (GlcNAc...) (keratan sulfate) asparagine) is linked at Asn-201. The N-linked (GlcNAc...) (keratan sulfate) asparagine glycan is linked to Asn-291. LRR repeat units lie at residues 294–315 (SLLELDLSYNQLQKIPPVNTNL) and 316–335 (ENLYLQGNRINEFSISSFCT). Cys-334 and Cys-367 are oxidised to a cystine. A glycan (N-linked (GlcNAc...) asparagine) is linked at Asn-341. The stretch at 344–365 (KLQVLRLDGNEIKRSAMPADAP) is one LRR 11 repeat.

This sequence belongs to the small leucine-rich proteoglycan (SLRP) family. SLRP class II subfamily. Binds to type I and type II collagen. Binds keratan sulfate chains.

The protein localises to the secreted. The protein resides in the extracellular space. It is found in the extracellular matrix. Its function is as follows. Affects the rate of fibrils formation. May have a primary role in collagen fibrillogenesis. This chain is Fibromodulin (FMOD), found in Homo sapiens (Human).